A 475-amino-acid polypeptide reads, in one-letter code: Ribulose bisphosphate carboxylase large chain (475 aa).

Residues 1-2 constitute a propeptide that is removed on maturation; sequence MS. An N-acetylproline modification is found at proline 3. At lysine 14 the chain carries N6,N6,N6-trimethyllysine. Positions 123 and 173 each coordinate substrate. Lysine 175 (proton acceptor) is an active-site residue. Lysine 177 serves as a coordination point for substrate. Mg(2+)-binding residues include lysine 201, aspartate 203, and glutamate 204. The residue at position 201 (lysine 201) is an N6-carboxylysine. Residue histidine 294 is the Proton acceptor of the active site. Residues arginine 295, histidine 327, and serine 379 each contribute to the substrate site.

This sequence belongs to the RuBisCO large chain family. Type I subfamily. As to quaternary structure, heterohexadecamer of 8 large chains and 8 small chains; disulfide-linked. The disulfide link is formed within the large subunit homodimers. Mg(2+) serves as cofactor. Post-translationally, the disulfide bond which can form in the large chain dimeric partners within the hexadecamer appears to be associated with oxidative stress and protein turnover.

It localises to the plastid. The protein localises to the chloroplast. It catalyses the reaction 2 (2R)-3-phosphoglycerate + 2 H(+) = D-ribulose 1,5-bisphosphate + CO2 + H2O. The enzyme catalyses D-ribulose 1,5-bisphosphate + O2 = 2-phosphoglycolate + (2R)-3-phosphoglycerate + 2 H(+). Functionally, ruBisCO catalyzes two reactions: the carboxylation of D-ribulose 1,5-bisphosphate, the primary event in carbon dioxide fixation, as well as the oxidative fragmentation of the pentose substrate in the photorespiration process. Both reactions occur simultaneously and in competition at the same active site. The sequence is that of Ribulose bisphosphate carboxylase large chain from Cryptomeria japonica (Japanese cedar).